Reading from the N-terminus, the 517-residue chain is ATP synthase subunit beta (517 aa).

Composition is skewed to low complexity over residues 1 to 22 and 29 to 42; these read MAKA…AAKA and AKTA…APKA. The tract at residues 1 to 42 is disordered; the sequence is MAKAATPKTTAAAEAKPAAAKAPAKKAPAKTAAAKSDAAPKA. 195-202 contributes to the ATP binding site; sequence GGAGVGKT.

The protein belongs to the ATPase alpha/beta chains family. F-type ATPases have 2 components, CF(1) - the catalytic core - and CF(0) - the membrane proton channel. CF(1) has five subunits: alpha(3), beta(3), gamma(1), delta(1), epsilon(1). CF(0) has three main subunits: a(1), b(2) and c(9-12). The alpha and beta chains form an alternating ring which encloses part of the gamma chain. CF(1) is attached to CF(0) by a central stalk formed by the gamma and epsilon chains, while a peripheral stalk is formed by the delta and b chains.

The protein resides in the cell inner membrane. The catalysed reaction is ATP + H2O + 4 H(+)(in) = ADP + phosphate + 5 H(+)(out). Its function is as follows. Produces ATP from ADP in the presence of a proton gradient across the membrane. The catalytic sites are hosted primarily by the beta subunits. This is ATP synthase subunit beta from Brucella anthropi (strain ATCC 49188 / DSM 6882 / CCUG 24695 / JCM 21032 / LMG 3331 / NBRC 15819 / NCTC 12168 / Alc 37) (Ochrobactrum anthropi).